We begin with the raw amino-acid sequence, 283 residues long: Pantothenate synthetase (283 aa).

ATP is bound at residue 30–37 (MGYLHEGH). Catalysis depends on His-37, which acts as the Proton donor. Residue Gln-61 coordinates (R)-pantoate. A beta-alanine-binding site is contributed by Gln-61. Residue 147–150 (GQKD) coordinates ATP. Gln-153 contacts (R)-pantoate. ATP is bound by residues Val-176 and 184-187 (LSSR).

This sequence belongs to the pantothenate synthetase family. In terms of assembly, homodimer.

Its subcellular location is the cytoplasm. It catalyses the reaction (R)-pantoate + beta-alanine + ATP = (R)-pantothenate + AMP + diphosphate + H(+). The protein operates within cofactor biosynthesis; (R)-pantothenate biosynthesis; (R)-pantothenate from (R)-pantoate and beta-alanine: step 1/1. In terms of biological role, catalyzes the condensation of pantoate with beta-alanine in an ATP-dependent reaction via a pantoyl-adenylate intermediate. This Moorella thermoacetica (strain ATCC 39073 / JCM 9320) protein is Pantothenate synthetase.